The primary structure comprises 286 residues: DNA-directed RNA polymerase subunit Rpo3 (286 aa).

Belongs to the archaeal Rpo3/eukaryotic RPB3 RNA polymerase subunit family. In terms of assembly, part of the RNA polymerase complex.

The protein localises to the cytoplasm. It catalyses the reaction RNA(n) + a ribonucleoside 5'-triphosphate = RNA(n+1) + diphosphate. In terms of biological role, DNA-dependent RNA polymerase (RNAP) catalyzes the transcription of DNA into RNA using the four ribonucleoside triphosphates as substrates. The chain is DNA-directed RNA polymerase subunit Rpo3 from Aeropyrum pernix (strain ATCC 700893 / DSM 11879 / JCM 9820 / NBRC 100138 / K1).